The chain runs to 308 residues: Oxygen-dependent coproporphyrinogen-III oxidase (308 aa).

Serine 94 provides a ligand contact to substrate. The a divalent metal cation site is built by histidine 98 and histidine 108. Histidine 108 serves as the catalytic Proton donor. A substrate-binding site is contributed by 110–112 (NVR). Positions 147 and 177 each coordinate a divalent metal cation. The important for dimerization stretch occupies residues 242-277 (YVEFNLVWDRGTLFGLQTGGRTESILMSMPPLVRWE). 260-262 (GGR) serves as a coordination point for substrate.

It belongs to the aerobic coproporphyrinogen-III oxidase family. Homodimer. The cofactor is a divalent metal cation.

It is found in the cytoplasm. The enzyme catalyses coproporphyrinogen III + O2 + 2 H(+) = protoporphyrinogen IX + 2 CO2 + 2 H2O. It functions in the pathway porphyrin-containing compound metabolism; protoporphyrin-IX biosynthesis; protoporphyrinogen-IX from coproporphyrinogen-III (O2 route): step 1/1. In terms of biological role, involved in the heme biosynthesis. Catalyzes the aerobic oxidative decarboxylation of propionate groups of rings A and B of coproporphyrinogen-III to yield the vinyl groups in protoporphyrinogen-IX. This Yersinia enterocolitica serotype O:8 / biotype 1B (strain NCTC 13174 / 8081) protein is Oxygen-dependent coproporphyrinogen-III oxidase.